The chain runs to 293 residues: Ribosomal protein L11 methyltransferase (293 aa).

4 residues coordinate S-adenosyl-L-methionine: Thr145, Gly166, Asp188, and Asn230.

The protein belongs to the methyltransferase superfamily. PrmA family.

Its subcellular location is the cytoplasm. It carries out the reaction L-lysyl-[protein] + 3 S-adenosyl-L-methionine = N(6),N(6),N(6)-trimethyl-L-lysyl-[protein] + 3 S-adenosyl-L-homocysteine + 3 H(+). Functionally, methylates ribosomal protein L11. In Escherichia coli O81 (strain ED1a), this protein is Ribosomal protein L11 methyltransferase.